Here is a 239-residue protein sequence, read N- to C-terminus: LexA repressor (239 aa).

Positions 26 to 46 form a DNA-binding region, H-T-H motif; sequence FDEMKDALDLASKSGIHRLIT. Catalysis depends on for autocatalytic cleavage activity residues Ser-159 and Lys-197.

This sequence belongs to the peptidase S24 family. In terms of assembly, homodimer.

The enzyme catalyses Hydrolysis of Ala-|-Gly bond in repressor LexA.. In terms of biological role, represses a number of genes involved in the response to DNA damage (SOS response), including recA and lexA. In the presence of single-stranded DNA, RecA interacts with LexA causing an autocatalytic cleavage which disrupts the DNA-binding part of LexA, leading to derepression of the SOS regulon and eventually DNA repair. The sequence is that of LexA repressor from Allorhizobium ampelinum (strain ATCC BAA-846 / DSM 112012 / S4) (Agrobacterium vitis (strain S4)).